We begin with the raw amino-acid sequence, 393 residues long: NAD(P)H-quinone oxidoreductase subunit H, chloroplastic (393 aa).

It belongs to the complex I 49 kDa subunit family. In terms of assembly, NDH is composed of at least 16 different subunits, 5 of which are encoded in the nucleus.

Its subcellular location is the plastid. The protein localises to the chloroplast thylakoid membrane. It carries out the reaction a plastoquinone + NADH + (n+1) H(+)(in) = a plastoquinol + NAD(+) + n H(+)(out). It catalyses the reaction a plastoquinone + NADPH + (n+1) H(+)(in) = a plastoquinol + NADP(+) + n H(+)(out). Functionally, NDH shuttles electrons from NAD(P)H:plastoquinone, via FMN and iron-sulfur (Fe-S) centers, to quinones in the photosynthetic chain and possibly in a chloroplast respiratory chain. The immediate electron acceptor for the enzyme in this species is believed to be plastoquinone. Couples the redox reaction to proton translocation, and thus conserves the redox energy in a proton gradient. In Draba nemorosa (Woodland whitlowgrass), this protein is NAD(P)H-quinone oxidoreductase subunit H, chloroplastic.